We begin with the raw amino-acid sequence, 42 residues long: Daisho1 (42 aa).

The first 20 residues, 1–20, serve as a signal peptide directing secretion; that stretch reads MKFFQAAALLLAMFAALANA. The propeptide at 21-26 is removed by a dipeptidylpeptidase; that stretch reads EPVPQP. Threonine 41 bears the Threonine amide mark.

Hemolymph (at protein level).

The protein resides in the secreted. In terms of biological role, peptide which plays a role in the humoral immune response to a subset of filamentous fungi, including F.oxysporum and F.verticillioides. This chain is Daisho1, found in Drosophila melanogaster (Fruit fly).